The sequence spans 3640 residues: Serine/threonine-protein kinase SMG1 (3640 aa).

Over residues 21–34 the composition is skewed to polar residues; it reads NDWQPRSDSLSASQ. Residues 21–41 form a disordered region; the sequence is NDWQPRSDSLSASQDGVKCSV. One can recognise an FAT domain in the interval 1495-1843; that stretch reads YCHSGKCELA…LYPAIVGSIS (349 aa). The HEAT repeat unit spans residues 1794–1829; sequence APWRGIIPQLFSRLNHPEAYIRQSICSLLCRVAQDS. Residues 1870–1890 form a disordered region; sequence GLCGGESETGSGPTSQESSRG. Residues 1874–1887 are compositionally biased toward low complexity; the sequence is GESETGSGPTSQES. Residues 2102–2441 form the PI3K/PI4K catalytic domain; the sequence is VGNTITILPT…MERDITRSLF (340 aa). The interval 2108–2114 is G-loop; it reads ILPTKTK. A catalytic loop region spans residues 2310 to 2318; sequence GLGDRHLDN. Residues 2330–2354 are activation loop; that stretch reads HIDYNVCFEKGKSLRVPEKVPFRMT. Residues 3608 to 3640 form the FATC domain; that stretch reads RRMSVTEQVDYVIKEATNVDNLAQLYEGWTAWV.

This sequence belongs to the PI3/PI4-kinase family. Requires Mn(2+) as cofactor. Autophosphorylated.

It is found in the nucleus. The protein resides in the cytoplasm. It carries out the reaction L-seryl-[protein] + ATP = O-phospho-L-seryl-[protein] + ADP + H(+). It catalyses the reaction L-threonyl-[protein] + ATP = O-phospho-L-threonyl-[protein] + ADP + H(+). Its function is as follows. Serine/threonine protein kinase involved in both mRNA surveillance and genotoxic stress response pathways. Recognizes the substrate consensus sequence [ST]-Q. Plays a central role in nonsense-mediated decay (NMD) of mRNAs containing premature stop codons by phosphorylating UPF1/RENT1. In Danio rerio (Zebrafish), this protein is Serine/threonine-protein kinase SMG1.